We begin with the raw amino-acid sequence, 143 residues long: Probable cyclic pyranopterin monophosphate synthase (143 aa).

Residues 61–63 (YCH) and 97–98 (ME) contribute to the substrate site. The active site involves D112.

Belongs to the MoaC family. In terms of assembly, homohexamer; trimer of dimers.

It catalyses the reaction (8S)-3',8-cyclo-7,8-dihydroguanosine 5'-triphosphate = cyclic pyranopterin phosphate + diphosphate. The protein operates within cofactor biosynthesis; molybdopterin biosynthesis. Catalyzes the conversion of (8S)-3',8-cyclo-7,8-dihydroguanosine 5'-triphosphate to cyclic pyranopterin monophosphate (cPMP). This Thermoplasma acidophilum (strain ATCC 25905 / DSM 1728 / JCM 9062 / NBRC 15155 / AMRC-C165) protein is Probable cyclic pyranopterin monophosphate synthase.